Here is a 458-residue protein sequence, read N- to C-terminus: Flavohemoprotein (458 aa).

The Globin domain maps to 2–158 (PLSEDTIKAV…LAHLFVRREE (157 aa)). His-107 lines the heme b pocket. Active-site charge relay system residues include Tyr-117 and Glu-157. The segment at 169–457 (GGWRQTRSFR…FEMFGPFKPL (289 aa)) is reductase. An FAD-binding FR-type domain is found at 172 to 279 (RQTRSFRVEE…APPYGDFFLE (108 aa)). FAD is bound by residues Tyr-211 and 228–231 (RQYS). 320–325 (GIGQTP) provides a ligand contact to NADP(+). 450–453 (MFGP) serves as a coordination point for FAD.

Belongs to the globin family. Two-domain flavohemoproteins subfamily. The protein in the C-terminal section; belongs to the flavoprotein pyridine nucleotide cytochrome reductase family. As to quaternary structure, monomer. The cofactor is heme b. It depends on FAD as a cofactor.

It carries out the reaction 2 nitric oxide + NADPH + 2 O2 = 2 nitrate + NADP(+) + H(+). The catalysed reaction is 2 nitric oxide + NADH + 2 O2 = 2 nitrate + NAD(+) + H(+). Flavohemoprotein involved in nitric oxide (NO) detoxification in an aerobic process, termed nitric oxide dioxygenase (NOD) reaction that utilizes O(2) and NAD(P)H to convert NO to nitrate, which protects the protozoan parasite from various noxious nitrogen compounds. Therefore, plays a central role in the inducible response to nitrosative stress. May also be involved in O(2) detoxification. The protein is Flavohemoprotein (hmpA) of Giardia intestinalis (strain ATCC 50581 / GS clone H7) (Giardia lamblia).